The chain runs to 406 residues: S-adenosylmethionine synthase (406 aa).

An ATP-binding site is contributed by His16. Residue Asp18 participates in Mg(2+) binding. Glu44 lines the K(+) pocket. L-methionine is bound by residues Glu57 and Gln109. Residues 109–119 (QSPQIAQGVDE) are flexible loop. Residues 174–176 (DAK), 249–250 (RF), Asp258, 264–265 (RK), Ala281, and Lys285 contribute to the ATP site. Asp258 serves as a coordination point for L-methionine. Lys289 is a binding site for L-methionine.

The protein belongs to the AdoMet synthase family. Homotetramer; dimer of dimers. Mg(2+) serves as cofactor. The cofactor is K(+).

Its subcellular location is the cytoplasm. The enzyme catalyses L-methionine + ATP + H2O = S-adenosyl-L-methionine + phosphate + diphosphate. Its pathway is amino-acid biosynthesis; S-adenosyl-L-methionine biosynthesis; S-adenosyl-L-methionine from L-methionine: step 1/1. Functionally, catalyzes the formation of S-adenosylmethionine (AdoMet) from methionine and ATP. The overall synthetic reaction is composed of two sequential steps, AdoMet formation and the subsequent tripolyphosphate hydrolysis which occurs prior to release of AdoMet from the enzyme. The sequence is that of S-adenosylmethionine synthase from Sphingopyxis alaskensis (strain DSM 13593 / LMG 18877 / RB2256) (Sphingomonas alaskensis).